We begin with the raw amino-acid sequence, 213 residues long: Imidazole glycerol phosphate synthase subunit HisH (213 aa).

Residues 4 to 213 (SIAIVDYGMG…LYRNFVHWNP (210 aa)) enclose the Glutamine amidotransferase type-1 domain. Cys-83 serves as the catalytic Nucleophile. Residues His-193 and Glu-195 contribute to the active site.

As to quaternary structure, heterodimer of HisH and HisF.

It is found in the cytoplasm. It carries out the reaction 5-[(5-phospho-1-deoxy-D-ribulos-1-ylimino)methylamino]-1-(5-phospho-beta-D-ribosyl)imidazole-4-carboxamide + L-glutamine = D-erythro-1-(imidazol-4-yl)glycerol 3-phosphate + 5-amino-1-(5-phospho-beta-D-ribosyl)imidazole-4-carboxamide + L-glutamate + H(+). The enzyme catalyses L-glutamine + H2O = L-glutamate + NH4(+). The protein operates within amino-acid biosynthesis; L-histidine biosynthesis; L-histidine from 5-phospho-alpha-D-ribose 1-diphosphate: step 5/9. In terms of biological role, IGPS catalyzes the conversion of PRFAR and glutamine to IGP, AICAR and glutamate. The HisH subunit catalyzes the hydrolysis of glutamine to glutamate and ammonia as part of the synthesis of IGP and AICAR. The resulting ammonia molecule is channeled to the active site of HisF. The protein is Imidazole glycerol phosphate synthase subunit HisH of Burkholderia pseudomallei (strain K96243).